The chain runs to 503 residues: 2-isopropylmalate synthase (503 aa).

Positions 4–264 (LYIFDTTLRD…EVSIKTEEIY (261 aa)) constitute a Pyruvate carboxyltransferase domain. Aspartate 13, histidine 201, histidine 203, and asparagine 237 together coordinate Mn(2+). The regulatory domain stretch occupies residues 388–503 (KLRHLQVVSG…NQLVMLKGKD (116 aa)).

It belongs to the alpha-IPM synthase/homocitrate synthase family. LeuA type 1 subfamily. As to quaternary structure, homodimer. Mn(2+) serves as cofactor.

The protein resides in the cytoplasm. It catalyses the reaction 3-methyl-2-oxobutanoate + acetyl-CoA + H2O = (2S)-2-isopropylmalate + CoA + H(+). The protein operates within amino-acid biosynthesis; L-leucine biosynthesis; L-leucine from 3-methyl-2-oxobutanoate: step 1/4. In terms of biological role, catalyzes the condensation of the acetyl group of acetyl-CoA with 3-methyl-2-oxobutanoate (2-ketoisovalerate) to form 3-carboxy-3-hydroxy-4-methylpentanoate (2-isopropylmalate). The chain is 2-isopropylmalate synthase from Dictyoglomus turgidum (strain DSM 6724 / Z-1310).